Here is a 409-residue protein sequence, read N- to C-terminus: tRNA-specific 2-thiouridylase MnmA (409 aa).

Residues 20–27 and leucine 46 contribute to the ATP site; that span reads AMSGGVDS. The active-site Nucleophile is the cysteine 114. A disulfide bridge links cysteine 114 with cysteine 210. Glycine 138 is an ATP binding site. The interaction with tRNA stretch occupies residues 160 to 162; that stretch reads RDQ. Residue cysteine 210 is the Cysteine persulfide intermediate of the active site.

Belongs to the MnmA/TRMU family.

The protein localises to the cytoplasm. The enzyme catalyses S-sulfanyl-L-cysteinyl-[protein] + uridine(34) in tRNA + AH2 + ATP = 2-thiouridine(34) in tRNA + L-cysteinyl-[protein] + A + AMP + diphosphate + H(+). Its function is as follows. Catalyzes the 2-thiolation of uridine at the wobble position (U34) of tRNA, leading to the formation of s(2)U34. The polypeptide is tRNA-specific 2-thiouridylase MnmA (Bartonella henselae (strain ATCC 49882 / DSM 28221 / CCUG 30454 / Houston 1) (Rochalimaea henselae)).